A 342-amino-acid polypeptide reads, in one-letter code: CD2 antigen cytoplasmic tail-binding protein 2 (342 aa).

The tract at residues 1–64 is disordered; sequence MPKRKVTFQG…DEEGSSKYDI (64 aa). Lys-26 is covalently cross-linked (Glycyl lysine isopeptide (Lys-Gly) (interchain with G-Cter in SUMO2)). Lys-44 bears the N6-acetyllysine mark. Residues Ser-46, Ser-49, and Ser-117 each carry the phosphoserine modification. Disordered regions lie at residues 130–150 and 177–200; these read RPPD…GQTP and LGAR…PQRL. Position 196 is a phosphoserine (Ser-196). Residues 281–339 enclose the GYF domain; that stretch reads DVMWEYKWENTGDAELYGPFTSAQMQTWVSEGYFPDGVYCRKLDPPGGQFYNSKRIDFE.

Component of the U5 snRNP complex composed of the U5 snRNA and at least PRPF6, PRPF8, SNRNP200, EFTUD2, SNRNP40, DDX23, TXNL4A and CD2BP2. Interacts directly with TXNL4A and PRPF6. Interacts (via GYF domain) with CD2 (via Pro-rich sequence in the cytoplasmic domain). Interacts with PQBP1.

The protein localises to the cytoplasm. Its subcellular location is the nucleus. Its function is as follows. Involved in pre-mRNA splicing as component of the U5 snRNP complex that is involved in spliceosome assembly. This Mus musculus (Mouse) protein is CD2 antigen cytoplasmic tail-binding protein 2 (Cd2bp2).